A 551-amino-acid polypeptide reads, in one-letter code: Intestinal-type alkaline phosphatase 2 (551 aa).

A signal peptide spans 1-19 (MQGAWVLLLLGFRLQLSLS). D61 provides a ligand contact to Mg(2+). Residues D61 and S111 each contribute to the Zn(2+) site. The Phosphoserine intermediate role is filled by S111. C140 and C202 are disulfide-bonded. N-linked (GlcNAc...) asparagine glycosylation occurs at N141. Position 174 (S174) interacts with Mg(2+). E235 contacts Ca(2+). N241 is a glycosylation site (N-linked (GlcNAc...) asparagine). Ca(2+) is bound by residues F288, E289, and D304. Residue E330 participates in Mg(2+) binding. D335, H339, D376, and H377 together coordinate Zn(2+). N426 carries N-linked (GlcNAc...) asparagine glycosylation. C485 and C492 are disulfide-bonded. The disordered stretch occupies residues 496–537 (PPADENRPTTPVQNSTTTTTTTTTTTTTTTTTRVQNSASSLG). Residue N509 is glycosylated (N-linked (GlcNAc...) asparagine). Low complexity predominate over residues 511–527 (TTTTTTTTTTTTTTTTT). Residues 528-537 (RVQNSASSLG) are compositionally biased toward polar residues. N531 carries GPI-anchor amidated asparagine lipidation. A propeptide spans 532 to 551 (SASSLGPATAPLAWHYWPRR) (removed in mature form).

The protein belongs to the alkaline phosphatase family. As to quaternary structure, homodimer. Requires Mg(2+) as cofactor. The cofactor is Zn(2+). It depends on Ca(2+) as a cofactor.

Its subcellular location is the cell membrane. The enzyme catalyses a phosphate monoester + H2O = an alcohol + phosphate. Functionally, alkaline phosphatase that can hydrolyze various phosphate compounds. The protein is Intestinal-type alkaline phosphatase 2 of Rattus norvegicus (Rat).